The following is a 122-amino-acid chain: T cell receptor gamma variable 9 (122 aa).

A signal peptide spans 1 to 20; that stretch reads MLSLLHTSTLAVLGALCVYG. Positions 27 to 122 constitute an Ig-like domain; that stretch reads PQISSTKTLS…ATYYCALWEV (96 aa). Cysteine 43 and cysteine 117 are oxidised to a cystine.

In terms of assembly, gamma-delta TR is a heterodimer composed of a gamma and delta chain; disulfide-linked. The gamma-delta TR is associated with the transmembrane signaling CD3 coreceptor proteins following the stoichiometry: a single gamma-delta TR heterodimer associates with one CD3D-CD3E heterodimer, one CD3G-CD3E heterodimer and one CD247 homodimer forming a stable octameric structure. Upon activation, gamma-delta TR complex associates with FCER1G to initiate intracellular signaling.

It localises to the cell membrane. V region of the variable domain of T cell receptor (TR) gamma chain that participates in the antigen recognition. Gamma-delta TRs recognize a variety of self and foreign non-peptide antigens frequently expressed at the epithelial boundaries between the host and external environment, including endogenous lipids presented by MH-like protein CD1D and phosphoantigens presented by butyrophilin-like molecule BTN3A1. Upon antigen recognition induces rapid, innate-like immune responses involved in pathogen clearance and tissue repair. Binding of gamma-delta TR complex to antigen triggers phosphorylation of immunoreceptor tyrosine-based activation motifs (ITAMs) in the CD3 chains by the LCK and FYN kinases, allowing the recruitment, phosphorylation, and activation of ZAP70 that facilitates phosphorylation of the scaffolding proteins LCP2 and LAT. This lead to the formation of a supramolecular signalosome that recruits the phospholipase PLCG1, resulting in calcium mobilization and ERK activation, ultimately leading to T cell expansion and differentiation into effector cells. Gamma-delta TRs are produced through somatic rearrangement of a limited repertoire of variable (V), diversity (D), and joining (J) genes. The potential diversity of gamma-delta TRs is conferred by the unique ability to rearrange (D) genes in tandem and to utilize all three reading frames. The combinatorial diversity is considerably increased by the sequence exonuclease trimming and random nucleotide (N) region additions which occur during the V-(D)-J rearrangements. The polypeptide is T cell receptor gamma variable 9 (Homo sapiens (Human)).